The chain runs to 844 residues: Meiosis-specific protein PAIR3 (844 aa).

Disordered stretches follow at residues 41 to 389 (TSSV…RERR), 418 to 506 (KLSS…RFSD), 532 to 604 (DDLF…QISI), and 616 to 669 (WLSD…EPEK). The span at 106–120 (QPDDNAIEQTGTFSF) shows a compositional bias: polar residues. Composition is skewed to basic and acidic residues over residues 122–134 (TRREQDSHLDQLD) and 145–164 (RQVESADKNKPNSEMLRMKL). Polar residues-rich tracts occupy residues 191–208 (QPKSQIANGPSSGRQKVF) and 218–229 (TPAQFNSQTANK). Composition is skewed to basic and acidic residues over residues 256–270 (RKKEPTGSTHQDKSG) and 324–363 (AKVEPKKAHCSDRISHKTTQDDMERKVPSKYIPSEKKGEK). Composition is skewed to polar residues over residues 364 to 382 (TNSFSSLSRTGKTAESCSR) and 420 to 440 (SSPQLTSFKSKGKCSSISPQQ). Residues 441-456 (KENDNTHIPEASDRTA) show a composition bias toward basic and acidic residues. Low complexity predominate over residues 459–473 (NSFNSTPSPAANPSP). Over residues 545–554 (RSRSTSFTSD) the composition is skewed to polar residues. A compositionally biased stretch (basic and acidic residues) spans 616 to 640 (WLSDVDSPDKSSIEHLGRKSHLKEG). Residues 646–661 (QLTSPTHFATSGTQET) show a composition bias toward polar residues. The stretch at 731 to 765 (VNAGKSKRKRLESTFEEQQEKLRILHEKFKEEVNQ) forms a coiled coil.

In terms of tissue distribution, expressed in pollen mother cells and the ovule tissues during meiosis.

Its subcellular location is the chromosome. The protein localises to the nucleus. Functionally, plays a crucial role in homologous chromosome pairing and synapsis in meiosis. Does not seem required for cytokinesis. Is essential for meiotic bouquet formation, homologous chromosome pairing and normal recombination, and synaptonemal complex (SC) assembly. Required for the proper association of PAIR2 with chromosomes. The chain is Meiosis-specific protein PAIR3 from Oryza sativa subsp. japonica (Rice).